The following is a 338-amino-acid chain: Envelope glycoprotein K (338 aa).

A signal peptide spans Met1–Gly30. Topologically, residues Ala31–Thr121 are extracellular. The interval Ala31 to Thr121 is involved in fusion. Residues Asn48 and Asn58 are each glycosylated (N-linked (GlcNAc...) asparagine; by host). The helical transmembrane segment at Gln122–His140 threads the bilayer. At Gln141 to Pro212 the chain is on the cytoplasmic side. Residues Ala213 to Val233 form a helical membrane-spanning segment. Residues Gly234–Cys243 lie on the Extracellular side of the membrane. Residues Ala244–Leu264 form a helical membrane-spanning segment. The Cytoplasmic portion of the chain corresponds to Thr265 to Ser301. An interaction with UL20 region spans residues Thr265 to Ser301. Residues Ile302–Leu322 form a helical membrane-spanning segment. Over Val323 to Leu338 the chain is Extracellular.

The protein belongs to the alphaherpesvirinae glycoprotein K family. In terms of assembly, interacts (via UL20 interaction region) with protein UL20 (via N-terminus); this interaction probably plays a role in the coordinate transport of protein UL20 and gK to the trans-Golgi network (TGN), and is required for the cell surface expression of gK. In terms of processing, N-glycosylated.

It localises to the host cell membrane. The protein resides in the host endosome membrane. It is found in the host Golgi apparatus membrane. Its function is as follows. Glycoprotein that probably modulates membrane fusion events during secondary envelopment of cytoplasmic capsids that bud into specific trans-Golgi network (TGN)-derived membranes. Also plays a role, together with gB, in virus-induced cell-to-cell fusion (syncytia formation). Seems to block fusion of virions with infected-cell membranes. In Human herpesvirus 2 (strain HG52) (HHV-2), this protein is Envelope glycoprotein K (gK).